The following is a 123-amino-acid chain: Small ribosomal subunit protein uS11 (123 aa).

The segment at 1-22 is disordered; that stretch reads MAKKRKKKLSSPEGISHIHASA.

This sequence belongs to the universal ribosomal protein uS11 family. In terms of assembly, part of the 30S ribosomal subunit. Interacts with proteins S7 and S18. Binds to IF-3.

Its function is as follows. Located on the platform of the 30S subunit, it bridges several disparate RNA helices of the 16S rRNA. Forms part of the Shine-Dalgarno cleft in the 70S ribosome. In Malacoplasma penetrans (strain HF-2) (Mycoplasma penetrans), this protein is Small ribosomal subunit protein uS11.